A 1481-amino-acid polypeptide reads, in one-letter code: Coiled-coil domain-containing protein 88B (1481 aa).

2 coiled-coil regions span residues 200-225 and 258-491; these read ELVA…RERD and SHHL…GSQH. Disordered stretches follow at residues 430 to 458, 494 to 731, and 1331 to 1481; these read ELQR…QDEV, LEEQ…AIPE, and PRRE…SLSQ. Residue Ser441 is modified to Phosphoserine. 2 stretches are compositionally biased toward polar residues: residues 542–557 and 568–590; these read ASYS…SQAP and QMVS…TVET. Ser649 is subject to Phosphoserine. The segment covering 660–695 has biased composition (basic and acidic residues); that stretch reads TLREPLKDQKALDRELELSKQQKETGRHEQRPKGLE. Residues 731 to 1308 are a coiled coil; the sequence is EEQALRDEVA…KIMDQYRVLE (578 aa). Phosphoserine is present on residues Ser1353 and Ser1384. The span at 1371 to 1386 shows a compositional bias: polar residues; the sequence is TGSSSPAPMRRVQSSL. The span at 1453-1472 shows a compositional bias: basic and acidic residues; it reads LSEHEADDTREAFQEQKPEK.

It belongs to the CCDC88 family. As to quaternary structure, homodimer. Interacts with DOCK8. Interacts (via C-terminus) with intact microtubules. Interacts with dynein-dynactin motor complex. Interacts (via C-terminus) with HSPA5. In terms of tissue distribution, abundantly expressed in immune cells, including both CD4(+) and CD8(+) T-cells and in myeloid cells (at protein level). Expressed in endothelium (at protein level). Expressed specifically in spleen, bone marrow, lymph nodes and thymus. Expressed in liver and heart.

The protein localises to the membrane. It localises to the cytoplasm. Its subcellular location is the cytoskeleton. The protein resides in the microtubule organizing center. It is found in the endoplasmic reticulum. The protein localises to the golgi apparatus. Functionally, acts as a positive regulator of T-cell maturation and inflammatory function. Required for several functions of T-cells in both the CD4(+) and the CD8(+) compartments and this includes expression of cell surface markers of activation, proliferation, and cytokine production in response to specific or non-specific stimulation and during the course of infection with the mouse malaria parasite Plasmodium berghei. Enhances NK cell cytotoxicity by positively regulating polarization of microtubule-organizing center (MTOC) to cytotoxic synapse, lytic granule transport along microtubules, and dynein-mediated clustering to MTOC. Interacts with HSPA5 and stabilizes the interaction between HSPA5 and ERN1, leading to suppression of ERN1-induced JNK activation and endoplasmic reticulum stress-induced apoptosis. The polypeptide is Coiled-coil domain-containing protein 88B (Ccdc88b) (Mus musculus (Mouse)).